The sequence spans 172 residues: Translation initiation factor IF-3 (172 aa).

Belongs to the IF-3 family. As to quaternary structure, monomer.

The protein localises to the cytoplasm. Functionally, IF-3 binds to the 30S ribosomal subunit and shifts the equilibrium between 70S ribosomes and their 50S and 30S subunits in favor of the free subunits, thus enhancing the availability of 30S subunits on which protein synthesis initiation begins. The sequence is that of Translation initiation factor IF-3 from Bartonella henselae (strain ATCC 49882 / DSM 28221 / CCUG 30454 / Houston 1) (Rochalimaea henselae).